The sequence spans 401 residues: LL-diaminopimelate aminotransferase (401 aa).

Substrate-binding residues include Y15 and G42. Pyridoxal 5'-phosphate-binding positions include Y72, 108–109 (AK), Y132, N176, Y207, and 235–237 (SFS). Substrate is bound by residues K109, Y132, and N176. Position 238 is an N6-(pyridoxal phosphate)lysine (K238). Positions 246 and 281 each coordinate pyridoxal 5'-phosphate. Substrate is bound by residues N281 and R377.

This sequence belongs to the class-I pyridoxal-phosphate-dependent aminotransferase family. LL-diaminopimelate aminotransferase subfamily. In terms of assembly, homodimer. It depends on pyridoxal 5'-phosphate as a cofactor.

The enzyme catalyses (2S,6S)-2,6-diaminopimelate + 2-oxoglutarate = (S)-2,3,4,5-tetrahydrodipicolinate + L-glutamate + H2O + H(+). Its pathway is amino-acid biosynthesis; L-lysine biosynthesis via DAP pathway; LL-2,6-diaminopimelate from (S)-tetrahydrodipicolinate (aminotransferase route): step 1/1. Its function is as follows. Involved in the synthesis of meso-diaminopimelate (m-DAP or DL-DAP), required for both lysine and peptidoglycan biosynthesis. Catalyzes the direct conversion of tetrahydrodipicolinate to LL-diaminopimelate. The chain is LL-diaminopimelate aminotransferase from Azobacteroides pseudotrichonymphae genomovar. CFP2.